A 466-amino-acid polypeptide reads, in one-letter code: DNA polymerase delta subunit 3 (466 aa).

Residue alanine 2 is modified to N-acetylalanine. 2 disordered regions span residues proline 145–methionine 218 and glutamate 255–lysine 466. Composition is skewed to basic and acidic residues over residues aspartate 205–methionine 218, glutamate 255–glutamate 265, and aspartate 281–lysine 297. A Glycyl lysine isopeptide (Lys-Gly) (interchain with G-Cter in SUMO); alternate cross-link involves residue lysine 259. A Glycyl lysine isopeptide (Lys-Gly) (interchain with G-Cter in SUMO2); alternate cross-link involves residue lysine 259. Lysine 262 participates in a covalent cross-link: Glycyl lysine isopeptide (Lys-Gly) (interchain with G-Cter in SUMO2). Residue serine 308 is modified to Phosphoserine. Pro residues predominate over residues proline 350–glutamate 360. A phosphoserine mark is found at serine 407 and serine 409. Threonine 411 is subject to Phosphothreonine. Serine 413 carries the post-translational modification Phosphoserine. The segment covering valine 432–lysine 441 has biased composition (basic and acidic residues). Residue lysine 433 forms a Glycyl lysine isopeptide (Lys-Gly) (interchain with G-Cter in SUMO); alternate linkage. Lysine 433 participates in a covalent cross-link: Glycyl lysine isopeptide (Lys-Gly) (interchain with G-Cter in SUMO2); alternate. The PIP-box motif lies at glutamine 456–phenylalanine 463.

In terms of assembly, component of both the DNA polymerase delta and DNA polymerase zeta complexes. The tetrameric DNA polymerase delta complex (Pol-delta4), which consists of POLD1/p125, POLD2/p50, POLD3/p66/p68 and POLD4/p12, with POLD1 bearing DNA polymerase and 3' to 5' proofreading exonuclease activities. Within this complex, directly interacts with POLD2. Following stress caused by DNA damaging agents or by replication stress, POLD4 is degraded and Pol-delta4 is converted into a trimeric form of the complex (Pol-delta3), which consists of POLD1, POLD2 and POLD3. Pol-delta3 is the major form occurring at S phase replication sites, as well as DNA damage sites. Directly interacts with PCNA, as do POLD1 and POLD4; this interaction stimulates Pol-delta polymerase activity. Component of the DNA polymerase zeta complex (POLZ), which consists of REV3L, MAD2L2, POLD2 and POLD3, with REV3L bearing DNA polymerase catalytic activity. The DNA polymerase delta complex interacts with POLDIP2; this interaction is probably mediated through direct binding to POLD2. In terms of processing, ubiquitinated, but not targeted to the proteasome. Sumoylated. Sumoylation by SUMO3 may be predominant.

Its subcellular location is the cytoplasm. The protein localises to the nucleus. Accessory component of both the DNA polymerase delta complex and the DNA polymerase zeta complex. As a component of the trimeric and tetrameric DNA polymerase delta complexes (Pol-delta3 and Pol-delta4, respectively), plays a role in high fidelity genome replication, including in lagging strand synthesis, and repair. Required for optimal Pol-delta activity. Stabilizes the Pol-delta complex and plays a major role in Pol-delta stimulation by PCNA. Pol-delta3 and Pol-delta4 are characterized by the absence or the presence of POLD4. They exhibit differences in catalytic activity. Most notably, Pol-delta3 shows higher proofreading activity than Pol-delta4. Although both Pol-delta3 and Pol-delta4 process Okazaki fragments in vitro, Pol-delta3 may also be better suited to fulfill this task, exhibiting near-absence of strand displacement activity compared to Pol-delta4 and stalling on encounter with the 5'-blocking oligonucleotides. Pol-delta3 idling process may avoid the formation of a gap, while maintaining a nick that can be readily ligated. Along with DNA polymerase kappa, DNA polymerase delta carries out approximately half of nucleotide excision repair (NER) synthesis following UV irradiation. In this context, POLD3, along with PCNA and RFC1-replication factor C complex, is required to recruit POLD1, the catalytic subunit of the polymerase delta complex, to DNA damage sites. Under conditions of DNA replication stress, required for the repair of broken replication forks through break-induced replication (BIR). Involved in the translesion synthesis (TLS) of templates carrying O6-methylguanine or abasic sites performed by Pol-delta4, independently of DNA polymerase zeta (REV3L) or eta (POLH). Facilitates abasic site bypass by DNA polymerase delta by promoting extension from the nucleotide inserted opposite the lesion. Also involved in TLS, as a component of the tetrameric DNA polymerase zeta complex. Along with POLD2, dramatically increases the efficiency and processivity of DNA synthesis of the DNA polymerase zeta complex compared to the minimal zeta complex, consisting of only REV3L and REV7. The chain is DNA polymerase delta subunit 3 (POLD3) from Bos taurus (Bovine).